The primary structure comprises 186 residues: ADP-ribosylation factor-like protein 8B (186 aa).

An intramembrane region (note=Mediates targeting to membranes) is located at residues 1 to 19; sequence MLALISRLLDWFRSLFWKE. Residues 29 to 35, 71 to 75, and 130 to 133 each bind GTP; these read QYSGKTT, DIGGQ, and NKRD. Residue K141 forms a Glycyl lysine isopeptide (Lys-Gly) (interchain with G-Cter in ubiquitin) linkage.

This sequence belongs to the small GTPase superfamily. Arf family. Interacts with tubulin. Interacts with BORCS5; recruits ARL8B to lysosomes. Interacts with VPS41; the interaction mediates the recruitment of the HOPS complex to lysosomes. Interacts (GTP-bound form) with PLEKHM2 (via RUN domain); the interaction is required to recruit the motor protein kinesin-1 on lysosomes. Interacts (GTP-bound form) with PLEKHM1 (via RUN domain); the interaction is required for PLEKHM1 localization to lysosomes and for ARL8B function in delivery and degradation of endocytic and autophagic cargo in lysosomes. PLEKHM1 and PLEKHM2 compete for interaction with ARL8B. Interacts (GTP-bound form) with RUFY1; the interaction is required for RUFY1 endosomal location. When GTP-bound, interacts with RUFY3 and RUFY4, but not with RUFY1, nor RUFY2. Post-translationally, ubiquitinated at Lys-141 by RNF167, leading to its degradation.

It is found in the late endosome membrane. The protein resides in the lysosome membrane. It localises to the cytoplasm. Its subcellular location is the cytoskeleton. The protein localises to the spindle. It is found in the cell projection. The protein resides in the axon. It localises to the synapse. Its subcellular location is the cytolytic granule membrane. The protein localises to the early endosome membrane. It carries out the reaction GTP + H2O = GDP + phosphate + H(+). Its function is as follows. Small GTPase which cycles between active GTP-bound and inactive GDP-bound states. In its active state, binds to a variety of effector proteins playing a key role in the regulation of lysosomal positioning which is important for nutrient sensing, natural killer cell-mediated cytotoxicity and antigen presentation. Along with its effectors, orchestrates lysosomal transport and fusion. Localizes specifically to lysosomal membranes and mediates anterograde lysosomal motility by recruiting PLEKHM2, which in turn recruits the motor protein kinesin-1 on lysosomes. Required for lysosomal and cytolytic granule exocytosis. Critical factor involved in NK cell-mediated cytotoxicity. Drives the polarization of cytolytic granules and microtubule-organizing centers (MTOCs) toward the immune synapse between effector NK lymphocytes and target cells. In neurons, mediates the anterograde axonal long-range transport of presynaptic lysosome-related vesicles required for presynaptic biogenesis and synaptic function. Also acts as a regulator of endosome to lysosome trafficking pathways of special significance for host defense. Recruits RUFY1 onto early endosomes regulating endosomes to trans-Golgi network proteins retrieval. Regulates cargo trafficking to lysosomes by binding to PLEKHM1 and recruiting the HOPS subunit VPS41, resulting in functional assembly of the HOPS complex on lysosomal membranes. Plays an important role in cargo delivery to lysosomes for antigen presentation and microbial killing. Directs the intersection of CD1d with lipid antigens in lysosomes, and plays a role in intersecting phagosomes with lysosomes to generate phagolysosomes that kill microbes. Involved in the process of MHC II presentation. Regulates the delivery of antigens to lysosomes and the formation of MHC II-peptide complexes through the recruitment of the HOPS complex to lysosomes allowing the fusion of late endosomes to lysosomes. May play a role in chromosome segregation. The polypeptide is ADP-ribosylation factor-like protein 8B (ARL8B) (Pongo abelii (Sumatran orangutan)).